A 22-amino-acid chain; its full sequence is Unknown protein from spot 168 of 2D-PAGE of etiolated coleoptile (22 aa).

In Zea mays (Maize), this protein is Unknown protein from spot 168 of 2D-PAGE of etiolated coleoptile.